The following is a 189-amino-acid chain: Phomopsin biosynthesis cluster protein D (189 aa).

Belongs to the oryJ family.

In terms of biological role, part of the gene cluster that mediates the biosynthesis of the phomopsins, a group of hexapeptide mycotoxins which infects lupins and causes lupinosis disease in livestock. The role of phomC within the phomopsins biosynthesis pathway has still to be determined. The pathway starts with the processing of the precursor phomA by several endopeptidases including kexin proteases as well as the cluster-specific S41 family peptidase phomP1 and the oligopeptidase phomG to produce 10 identical copies of the hexapeptide Tyr-Val-Ile-Pro-Ile-Asp. After being excised from the precursor peptide, the core peptides are cyclized and modified post-translationally by enzymes encoded within the gene cluster. The timing and order of proteolysis of the phomA precursor and PTMs are still unknown. Two tyrosinase-like enzymes, phomQ1 and phomQ2, catalyze the chlorination and hydroxylation of Tyr, respectively. PhomYb, is proposed to be involved in the construction of the macrocyclic structure. The other 4 ustYa family proteins may be involved in PTMs that generate the unique structure of phomopsin A. PhomYa is required for the hydroxylation of C-beta of Tyr. PhomYc, phomYd, and phomYe are responsible for the biosynthesis of 2,3-dehydroisoleucine (dIle), 2,3-dehydroaspartic acid (dAsp), and 3,4-dehydroproline (dPro), respectively. While dIle formation by phomYc is indispensable for the installation of dAsp by phomYd, the order of the other PTMs have not been elucidated yet. Most of the biosynthetic enzymes likely have broad substrate specificity, and thus, there might be a metabolic grid from a precursor to phomopsin A. The enzyme(s) responsible for the biosynthesis of 3,4-dehydrovaline (dVal) have also not been identified yet. Finally, phomM acts as an S-adenosylmethionine-dependent alpha-N-methyltransferase that catalyzes two successive N-methylation reactions, converting N-desmethyl-phomopsin A to phomopsin A and phomopsin A further to an N,N-dimethylated congener called phomopsin E. This is Phomopsin biosynthesis cluster protein D from Diaporthe leptostromiformis (Lupinosis disease fungus).